Reading from the N-terminus, the 338-residue chain is Anthranilate phosphoribosyltransferase (338 aa).

5-phospho-alpha-D-ribose 1-diphosphate is bound by residues glycine 81, 84 to 85 (GD), threonine 89, 91 to 94 (NVST), 109 to 117 (KHGNRALSS), and alanine 121. Residue glycine 81 coordinates anthranilate. Serine 93 contributes to the Mg(2+) binding site. Asparagine 112 contacts anthranilate. Residue arginine 167 participates in anthranilate binding. The Mg(2+) site is built by aspartate 225 and glutamate 226.

It belongs to the anthranilate phosphoribosyltransferase family. As to quaternary structure, homodimer. Mg(2+) is required as a cofactor.

It carries out the reaction N-(5-phospho-beta-D-ribosyl)anthranilate + diphosphate = 5-phospho-alpha-D-ribose 1-diphosphate + anthranilate. The protein operates within amino-acid biosynthesis; L-tryptophan biosynthesis; L-tryptophan from chorismate: step 2/5. Catalyzes the transfer of the phosphoribosyl group of 5-phosphorylribose-1-pyrophosphate (PRPP) to anthranilate to yield N-(5'-phosphoribosyl)-anthranilate (PRA). This Chelativorans sp. (strain BNC1) protein is Anthranilate phosphoribosyltransferase.